Consider the following 145-residue polypeptide: MRALIQRVSHASVTVDGVVVGQTGPGLLVLVCAMAGDGEAQADQLAAKIARLRIFKDEAGKMNRSVLDIGGAALVVSQFTLAADTRSGNRPGFSSAAPPAEGERIYEYFAAQLAAQGVPVETGRFGADMKVELLNDGPVTIWMDI.

Positions 137 to 138 match the Gly-cisPro motif, important for rejection of L-amino acids motif; that stretch reads GP.

Belongs to the DTD family. As to quaternary structure, homodimer.

It is found in the cytoplasm. The catalysed reaction is glycyl-tRNA(Ala) + H2O = tRNA(Ala) + glycine + H(+). The enzyme catalyses a D-aminoacyl-tRNA + H2O = a tRNA + a D-alpha-amino acid + H(+). Its function is as follows. An aminoacyl-tRNA editing enzyme that deacylates mischarged D-aminoacyl-tRNAs. Also deacylates mischarged glycyl-tRNA(Ala), protecting cells against glycine mischarging by AlaRS. Acts via tRNA-based rather than protein-based catalysis; rejects L-amino acids rather than detecting D-amino acids in the active site. By recycling D-aminoacyl-tRNA to D-amino acids and free tRNA molecules, this enzyme counteracts the toxicity associated with the formation of D-aminoacyl-tRNA entities in vivo and helps enforce protein L-homochirality. This Ruegeria pomeroyi (strain ATCC 700808 / DSM 15171 / DSS-3) (Silicibacter pomeroyi) protein is D-aminoacyl-tRNA deacylase.